The chain runs to 905 residues: Clumping factor B (905 aa).

A signal peptide spans Met1–Ala44. A YSIRK-G/S signaling motif motif is present at residues Tyr15–Ser26. Composition is skewed to polar residues over residues Ala44–Ala61 and Met68–Ser101. The tract at residues Ala44–Arg191 is disordered. The ligand binding A region stretch occupies residues Ser45–Asn542. Residues Thr102–Pro119 are compositionally biased toward low complexity. Over residues Gln134 to Ser189 the composition is skewed to polar residues. Residues Asp272–Ser276 carry the MIDAS-like motif motif. Positions Tyr530 to Asn877 are disordered. The segment covering Asp545–Glu555 has biased composition (pro residues). Positions Pro556–Asp829 are enriched in acidic residues. The span at Arg833 to Pro844 shows a compositional bias: polar residues. Residues His861–Glu874 show a composition bias toward basic and acidic residues. The LPXTG sorting signal motif lies at Leu866–Gly870. Position 869 is a pentaglycyl murein peptidoglycan amidated threonine (Thr869). A propeptide spans Gly870 to Ala905 (removed by sortase).

This sequence belongs to the serine-aspartate repeat-containing protein (SDr) family. In terms of processing, proteolytically cleaved by aureolysin (aur). This cleavage leads to the inactivation of ClfB.

Its subcellular location is the secreted. The protein localises to the cell wall. In terms of biological role, cell surface-associated protein implicated in virulence by promoting bacterial attachment to both alpha- and beta-chains of human fibrinogen and inducing the formation of bacterial clumps. The polypeptide is Clumping factor B (clfB) (Staphylococcus aureus (strain MSSA476)).